The primary structure comprises 382 residues: ATP phosphoribosyltransferase regulatory subunit (382 aa).

Belongs to the class-II aminoacyl-tRNA synthetase family. HisZ subfamily. As to quaternary structure, heteromultimer composed of HisG and HisZ subunits.

The protein localises to the cytoplasm. It functions in the pathway amino-acid biosynthesis; L-histidine biosynthesis; L-histidine from 5-phospho-alpha-D-ribose 1-diphosphate: step 1/9. In terms of biological role, required for the first step of histidine biosynthesis. May allow the feedback regulation of ATP phosphoribosyltransferase activity by histidine. The polypeptide is ATP phosphoribosyltransferase regulatory subunit (Lacticaseibacillus casei (strain BL23) (Lactobacillus casei)).